The sequence spans 211 residues: Shikimate kinase (211 aa).

Residues 1-22 are disordered; the sequence is MHFRYNYRMQRSKTPNTKNSDT. Polar residues predominate over residues 12–22; that stretch reads SKTPNTKNSDT. 36–41 provides a ligand contact to ATP; sequence GSGKTT. Threonine 40 is a binding site for Mg(2+). Residues aspartate 58, arginine 82, and glycine 104 each coordinate substrate. Arginine 142 is an ATP binding site. Arginine 161 lines the substrate pocket. Glutamine 178 contacts ATP.

It belongs to the shikimate kinase family. In terms of assembly, monomer. It depends on Mg(2+) as a cofactor.

It localises to the cytoplasm. It carries out the reaction shikimate + ATP = 3-phosphoshikimate + ADP + H(+). It participates in metabolic intermediate biosynthesis; chorismate biosynthesis; chorismate from D-erythrose 4-phosphate and phosphoenolpyruvate: step 5/7. In terms of biological role, catalyzes the specific phosphorylation of the 3-hydroxyl group of shikimic acid using ATP as a cosubstrate. This is Shikimate kinase from Nitrosomonas europaea (strain ATCC 19718 / CIP 103999 / KCTC 2705 / NBRC 14298).